Here is a 312-residue protein sequence, read N- to C-terminus: Large ribosomal subunit protein uL15m (312 aa).

Positions 63–89 (RIRKGRGPSSGYGKTAGRGTKGQKAHG) are disordered. Residues 70–82 (PSSGYGKTAGRGT) are compositionally biased toward gly residues.

It belongs to the universal ribosomal protein uL15 family. As to quaternary structure, component of the mitochondrial large ribosomal subunit (mt-LSU). Mature N.crassa 74S mitochondrial ribosomes consist of a small (37S) and a large (54S) subunit. The 37S small subunit contains a 16S ribosomal RNA (16S mt-rRNA) and 32 different proteins. The 54S large subunit contains a 23S rRNA (23S mt-rRNA) and 42 different proteins.

It localises to the mitochondrion. Component of the mitochondrial ribosome (mitoribosome), a dedicated translation machinery responsible for the synthesis of mitochondrial genome-encoded proteins, including at least some of the essential transmembrane subunits of the mitochondrial respiratory chain. The mitoribosomes are attached to the mitochondrial inner membrane and translation products are cotranslationally integrated into the membrane. This is Large ribosomal subunit protein uL15m (mrpl10) from Neurospora crassa (strain ATCC 24698 / 74-OR23-1A / CBS 708.71 / DSM 1257 / FGSC 987).